The following is a 479-amino-acid chain: 5-hydroxytryptamine receptor 2B (479 aa).

At 1 to 55 (MASSYKMSEQSTISEHILQKTCDHLILTDRSGLKAESAAEEMKQTAENQGNTVHW) the chain is on the extracellular side. The chain crosses the membrane as a helical span at residues 56–78 (AALLIFAVIIPTIGGNILVILAV). The Cytoplasmic segment spans residues 79-89 (SLEKRLQYATN). Residues 90 to 112 (YFLMSLAVADLLVGLFVMPIALL) traverse the membrane as a helical segment. Topologically, residues 113–128 (TIMFEATWPLPLALCP) are extracellular. Residues Cys127 and Cys206 are joined by a disulfide bond. Residues 129-150 (AWLFLDVLFSTASIMHLCAISL) form a helical membrane-spanning segment. Ergotamine contacts are provided by Asp134 and Thr139. The DRY motif; important for ligand-induced conformation changes signature appears at 151–153 (DRY). Over 151–170 (DRYIAIKKPIQANQCNSRTT) the chain is Cytoplasmic. Residues 171–191 (AFVKITVVWLISIGIAIPVPI) form a helical membrane-spanning segment. At 192-215 (KGIEADVVNAHNITCELTKDRFGS) the chain is on the extracellular side. Residue Asn203 is glycosylated (N-linked (GlcNAc...) asparagine). Leu208 is an ergotamine binding site. The [DE]RFG motif; may stabilize a conformation that preferentially activates signaling via beta-arrestin family members motif lies at 211–214 (DRFG). The helical transmembrane segment at 216 to 238 (FMLFGSLAAFFAPLTIMIVTYFL) threads the bilayer. The Cytoplasmic portion of the chain corresponds to 239-323 (TIHALRKKAY…TISNEQRASK (85 aa)). The helical transmembrane segment at 324-344 (VLGIVFLFFLLMWCPFFITNV) threads the bilayer. Residues 345 to 359 (TLALCDSCNQTTLKT) lie on the Extracellular side of the membrane. Cysteines 349 and 352 form a disulfide. N-linked (GlcNAc...) asparagine glycosylation occurs at Asn353. Residues 360–381 (LLQIFVWVGYVSSGVNPLIYTL) traverse the membrane as a helical segment. Residues 375-379 (NPLIY) carry the NPxxY motif; important for ligand-induced conformation changes and signaling motif. Residues 382–479 (FNKTFREAFG…DKVEDQVSYI (98 aa)) are Cytoplasmic-facing. Cys396 is lipidated: S-palmitoyl cysteine. A PDZ-binding motif is present at residues 477–479 (SYI).

This sequence belongs to the G-protein coupled receptor 1 family. In terms of assembly, interacts (via C-terminus) with MPDZ. Stomach fundus.

It is found in the cell membrane. The protein resides in the synapse. The protein localises to the synaptosome. In terms of biological role, G-protein coupled receptor for 5-hydroxytryptamine (serotonin). Also functions as a receptor for various ergot alkaloid derivatives and psychoactive substances. Ligand binding causes a conformation change that triggers signaling via guanine nucleotide-binding proteins (G proteins) and modulates the activity of downstream effectors. HTR2B is coupled to G(q)/G(11) G alpha proteins and activates phospholipase C-beta, releasing diacylglycerol (DAG) and inositol 1,4,5-trisphosphate (IP3) second messengers that modulate the activity of phosphatidylinositol 3-kinase and promote the release of Ca(2+) ions from intracellular stores, respectively. Beta-arrestin family members inhibit signaling via G proteins and mediate activation of alternative signaling pathways. Plays a role in the regulation of dopamine and 5-hydroxytryptamine release, 5-hydroxytryptamine uptake and in the regulation of extracellular dopamine and 5-hydroxytryptamine levels, and thereby affects neural activity. May play a role in the perception of pain. Plays a role in the regulation of behavior, including impulsive behavior. Required for normal proliferation of embryonic cardiac myocytes and normal heart development. Protects cardiomyocytes against apoptosis. Plays a role in the adaptation of pulmonary arteries to chronic hypoxia. Plays a role in vasoconstriction. Required for normal osteoblast function and proliferation, and for maintaining normal bone density. Required for normal proliferation of the interstitial cells of Cajal in the intestine. In Rattus norvegicus (Rat), this protein is 5-hydroxytryptamine receptor 2B (Htr2b).